Reading from the N-terminus, the 429-residue chain is Adenylosuccinate synthetase (429 aa).

GTP is bound by residues 12-18 (GDEGKGK) and 40-42 (GHT). Residue aspartate 13 is the Proton acceptor of the active site. 2 residues coordinate Mg(2+): aspartate 13 and glycine 40. Residues 13–16 (DEGK), 38–41 (NAGH), threonine 129, arginine 143, glutamine 224, threonine 239, and arginine 303 contribute to the IMP site. Residue histidine 41 is the Proton donor of the active site. Substrate is bound at residue 299-305 (ATTGRRR). Residues arginine 305, 331–333 (KLD), and 413–415 (SVG) contribute to the GTP site.

Belongs to the adenylosuccinate synthetase family. In terms of assembly, homodimer. The cofactor is Mg(2+).

It localises to the cytoplasm. The catalysed reaction is IMP + L-aspartate + GTP = N(6)-(1,2-dicarboxyethyl)-AMP + GDP + phosphate + 2 H(+). It participates in purine metabolism; AMP biosynthesis via de novo pathway; AMP from IMP: step 1/2. In terms of biological role, plays an important role in the de novo pathway of purine nucleotide biosynthesis. Catalyzes the first committed step in the biosynthesis of AMP from IMP. The chain is Adenylosuccinate synthetase from Desulforapulum autotrophicum (strain ATCC 43914 / DSM 3382 / VKM B-1955 / HRM2) (Desulfobacterium autotrophicum).